Consider the following 710-residue polypeptide: Amyloid beta precursor protein binding family B member 1 (710 aa).

Phosphoserine is present on Ser-135. Disordered regions lie at residues 143-256 (EQGP…SDLP) and 276-300 (GTTQWEPPGRASPSQGSSPQEESQL). The span at 145-173 (GPDEGEEKAAGEAEEDDEDEEEEEEEEDL) shows a compositional bias: acidic residues. The residue at position 204 (Lys-204) is an N6-acetyllysine. Over residues 223-234 (SWATLSQGSPSY) the composition is skewed to polar residues. The 33-residue stretch at 253–285 (SDLPAGWMRVQDTSGTYYWHIPTGTTQWEPPGR) folds into the WW domain. Low complexity predominate over residues 287–299 (SPSQGSSPQEESQ). A PID 1 domain is found at 370 to 509 (FAVRSLGWVE…SKIMSERRNA (140 aa)). Residue Ser-459 is modified to Phosphoserine; by PKC. At Ser-517 the chain carries Phosphoserine. The region spanning 542–699 (KFQVYYLGNV…RRGVQSLWGS (158 aa)) is the PID 2 domain. Residue Tyr-547 is modified to Phosphotyrosine; by ABL1. Residue Ser-610 is modified to Phosphoserine; by SGK1. The residue at position 701 (Lys-701) is an N6-acetyllysine.

In terms of assembly, component of a complex, at least composed of APBB1, RASD1/DEXRAS1 and APP. Interacts (via PID domain 2) with APP (with the intracellular domain of the amyloid-beta precursor protein). Interacts (via PID domain 2) with RASD1/DEXRAS1; impairs the transcription activation activity. Interacts (via PID domain 1) with KAT5/TIP60. Interacts (via the WW domain) with the proline-rich region of APBB1IP. Interacts with TSHZ1 and TSHZ2. Interacts (via the WW domain) with histone H2AX (when phosphorylated on 'Tyr-142') and the proline-rich region of ENAH. Interacts with MAPK8. Interacts (via PID domain 1) with TSHZ3 (via homeobox domain). Interacts with SET. Found in a trimeric complex with HDAC1 and TSHZ3; the interaction between HDAC1 and APBB1 is mediated by TSHZ3. Interacts (via WWW domain) with NEK6. Interacts (via WWW domain) with ABL1. Interacts with RNF157. Interacts with ARF6. Post-translationally, polyubiquitination by RNF157 leads to degradation by the proteasome. Phosphorylation at Ser-610 by SGK1 promotes its localization to the nucleus. Phosphorylated following nuclear translocation. Phosphorylation at Tyr-546 by ABL1 enhances transcriptional activation activity and reduces the affinity for RASD1/DEXRAS1. In terms of processing, acetylation at Lys-204 and Lys-701 by KAT5 promotes its transcription activator activity. Phosphorylated at Ser-459 by PKC upon insulin activation. In terms of tissue distribution, expressed in the brain, retinal lens and muscle cells (at protein level).

The protein localises to the cell membrane. Its subcellular location is the cytoplasm. It is found in the nucleus. The protein resides in the cell projection. It localises to the growth cone. The protein localises to the nucleus speckle. Transcription coregulator that can have both coactivator and corepressor functions. Adapter protein that forms a transcriptionally active complex with the gamma-secretase-derived amyloid precursor protein (APP) intracellular domain. Plays a central role in the response to DNA damage by translocating to the nucleus and inducing apoptosis. May act by specifically recognizing and binding histone H2AX phosphorylated on 'Tyr-142' (H2AXY142ph) at double-strand breaks (DSBs), recruiting other pro-apoptosis factors such as MAPK8/JNK1. Required for histone H4 acetylation at double-strand breaks (DSBs). Its ability to specifically bind modified histones and chromatin modifying enzymes such as KAT5/TIP60, probably explains its transcription activation activity. Functions in association with TSHZ3, SET and HDAC factors as a transcriptional repressor, that inhibits the expression of CASP4. Associates with chromatin in a region surrounding the CASP4 transcriptional start site(s). Involved in hippocampal neurite branching and neuromuscular junction formation, as a result plays a role in spatial memory functioning. Plays a role in the maintenance of lens transparency. May play a role in muscle cell strength. Acts as a molecular adapter that functions in neurite outgrowth by activating the RAC1-ARF6 axis upon insulin treatment. In Mus musculus (Mouse), this protein is Amyloid beta precursor protein binding family B member 1.